The chain runs to 508 residues: MENQKKNNFNQIDYFRWADYSKNNNNNNNNNNNNNINNNNNNNNNNNINNNIDNNNSFYRFISPPFNKINNNNNANNFNNINNNNNNNFNNYQLNDGNKISINNILNDNTTTTNTSANQNSANTNKTYNFSKNENGIVYEIDNFILDSNLVREQPFNNFNYLNIINNIQNFLQLISGKVNLLNVILGILVDDVNRYSVNPNSMSIIPSDNFPTPQLPLETNTDLNNTSDCSSTTFSSPPSSAFNSPNLQNDYTQPQNQKSQSSTIVKKNSSKSKSKNNKQSKDDGETNDGESPEIEEKRVIRLDMNLNPNPTIPKRGRPLKVRPFECSICKIKCSIYWRRILINEVRTSVCNACGLRTMKKTKKENIEKKKNKISNILNDHNSEIDNQIIIYLNQKKTTTTTTTTTTSSTNNLNNNNNNNNNNNNNNNNNNNNNNNNNNNDNNNNDNNNNDNNNNDNNNNNNNNNNNNNNNNNNNNNDNYNDSIYSRLYSDDYEDEYYEGEEYENEDE.

Disordered stretches follow at residues 20–51 (YSKN…INNN) and 203–296 (MSII…PEIE). Low complexity predominate over residues 23–51 (NNNNNNNNNNNNNINNNNNNNNNNNINNN). Polar residues predominate over residues 203 to 224 (MSIIPSDNFPTPQLPLETNTDL). Low complexity predominate over residues 225–247 (NNTSDCSSTTFSSPPSSAFNSPN). Residues 248–266 (LQNDYTQPQNQKSQSSTIV) show a composition bias toward polar residues. Positions 269 to 279 (NSSKSKSKNNK) are enriched in basic residues. The GATA-type zinc-finger motif lies at 327–354 (CSICKIKCSIYWRRILINEVRTSVCNAC). Positions 356–433 (LRTMKKTKKE…NNNNNNNNNN (78 aa)) form a coiled coil. The span at 399-482 (TTTTTTTTTS…NNNNNDNYND (84 aa)) shows a compositional bias: low complexity. The segment at 399-484 (TTTTTTTTTS…NNNDNYNDSI (86 aa)) is disordered.

The polypeptide is GATA zinc finger domain-containing protein 13 (gtaM) (Dictyostelium discoideum (Social amoeba)).